The primary structure comprises 284 residues: MEMO1 family protein MmarC5_0191 (284 aa).

It belongs to the MEMO1 family.

The chain is MEMO1 family protein MmarC5_0191 from Methanococcus maripaludis (strain C5 / ATCC BAA-1333).